A 426-amino-acid polypeptide reads, in one-letter code: Serine protease HTRA2, mitochondrial (426 aa).

The span at 31-58 (SSTCNSTNTDNGSHNTNYNSSNNNNNNN) shows a compositional bias: low complexity. The interval 31 to 59 (SSTCNSTNTDNGSHNTNYNSSNNNNNNND) is disordered. Residues 71–87 (FLVPFSLGALASSVVAG) traverse the membrane as a helical segment. The short motif at 79–82 (ALAS) is the IAP-binding element. A serine protease region spans residues 143–306 (SNGSGFVIEQ…IPIDYVKLFL (164 aa)). Active-site charge relay system residues include His-161, Asp-193, and Ser-270. Residues 329–414 (MGITMLTLTP…DLDMVILRGV (86 aa)) form the PDZ domain.

It belongs to the peptidase S1C family. As to quaternary structure, interacts with th/DIAP1 (via BIR 2 domain).

It is found in the mitochondrion intermembrane space. The protein resides in the mitochondrion membrane. It catalyses the reaction Cleavage of non-polar aliphatic amino-acids at the P1 position, with a preference for Val, Ile and Met. At the P2 and P3 positions, Arg is selected most strongly with a secondary preference for other hydrophilic residues.. Functionally, serine protease that shows proteolytic activity against a non-specific substrate beta-casein. Promotes or induces cell death either by direct binding to and inhibition of BIRC proteins (also called inhibitor of apoptosis proteins, IAPs), leading to an increase in caspase activity, or by a BIRC inhibition-independent, caspase-independent and serine protease activity-dependent mechanism. Can antagonize antiapoptotic activity of th/Diap1 by directly inducing the degradation of th/Diap1. The sequence is that of Serine protease HTRA2, mitochondrial from Drosophila grimshawi (Hawaiian fruit fly).